The chain runs to 233 residues: MMPRLQQHKIILRQLGLQPYAPVSQAMHNFTEFRTDTTPDEIWLVEHQHVFTQGQAGKAEHVLMPGDIPVIQSDRGGQVTYHGPGQQVMYVMVDLKRAKIGVRQLVTAIENTVIETLAHFNIDSHARPDAPGVYVEQQKICSLGLRIRRGCSFHGLALNIAMDLEPFQRINPCGYAGMQMTQVSALQPGVTVADVQPVLVREFTRQLGYPTAKLQPWSLSDYLLSSHSSSSVL.

The BPL/LPL catalytic domain maps to Asp36–Thr211. Residues Arg75–His82, Ser142–Gly144, and Gly155–Ala157 contribute to the substrate site. The Acyl-thioester intermediate role is filled by Cys173.

Belongs to the LipB family.

It is found in the cytoplasm. It catalyses the reaction octanoyl-[ACP] + L-lysyl-[protein] = N(6)-octanoyl-L-lysyl-[protein] + holo-[ACP] + H(+). It participates in protein modification; protein lipoylation via endogenous pathway; protein N(6)-(lipoyl)lysine from octanoyl-[acyl-carrier-protein]: step 1/2. Functionally, catalyzes the transfer of endogenously produced octanoic acid from octanoyl-acyl-carrier-protein onto the lipoyl domains of lipoate-dependent enzymes. Lipoyl-ACP can also act as a substrate although octanoyl-ACP is likely to be the physiological substrate. This Yersinia pestis bv. Antiqua (strain Antiqua) protein is Octanoyltransferase.